Reading from the N-terminus, the 584-residue chain is Outer membrane transporter CdiB-2 (584 aa).

The signal sequence occupies residues 1 to 20 (MATRFAILPVTALITLTAQA). Residues 24–44 (PTPNDQAAAARANAEQNQQAQ) are compositionally biased toward low complexity. The segment at 24–72 (PTPNDQAAAARANAEQNQQAQQRRDAQQRDATVQAPGVRSDVPRPEAYP) is disordered. One can recognise a POTRA domain in the interval 98–171 (SKAQGASALP…GALKLALIPG (74 aa)).

This sequence belongs to the TPS (TC 1.B.20) family.

The protein localises to the cell outer membrane. In terms of biological role, potential outer membrane protein component of a toxin-immunity protein module, which functions as a cellular contact-dependent growth inhibition (CDI) system. CDI modules allow bacteria to communicate with and inhibit the growth of closely related neighboring bacteria in a contact-dependent fashion. This protein may be required for secretion and assembly of the CdiA toxin protein. Functionally, expression of this cdiAIB locus in B.thailandensis confers protection against other bacteria carrying the locus; growth inhibition requires cellular contact. Probable member of a two partner secretion pathway (TPS) in which it mediates the secretion of CdiA2. This is Outer membrane transporter CdiB-2 (cdiB2) from Burkholderia pseudomallei (strain 1026b).